A 690-amino-acid chain; its full sequence is Secreted LysM effector Vd5LysM (690 aa).

2 N-linked (GlcNAc...) asparagine glycosylation sites follow: N4 and N69. 3 consecutive LysM domains span residues T203–I248, D253–I301, and R341–V387. N-linked (GlcNAc...) asparagine glycans are attached at residues N260, N295, N375, N410, N423, and N492. Residues P523–D546 form a disordered region. In terms of domain architecture, LysM 4 spans T549–V596. The span at S606–G619 shows a compositional bias: low complexity. Residues S606–D636 form a disordered region. Positions E639 to I686 constitute a LysM 5 domain.

This sequence belongs to the secreted LysM effector family.

Might have a role in sequestration of chitin oligosaccharides (breakdown products of fungal cell walls that are released during invasion and act as triggers of host immunity) to dampen host defense. Does not play an important role during host colonization. The polypeptide is Secreted LysM effector Vd5LysM (Verticillium dahliae (strain VdLs.17 / ATCC MYA-4575 / FGSC 10137) (Verticillium wilt)).